A 75-amino-acid polypeptide reads, in one-letter code: Tautomerase PptA (75 aa).

Pro-2 acts as the Proton acceptor; via imino nitrogen in catalysis.

It belongs to the 4-oxalocrotonate tautomerase family. PptA subfamily. In terms of assembly, homodimer.

The protein localises to the cytoplasm. This is Tautomerase PptA from Klebsiella pneumoniae (strain 342).